The primary structure comprises 207 residues: MNHLAEIESLLYVAGDEGITLQHIARLIMLDEAAVRQLLTKLAKRYQEDEQSGLNLIQAADCYKLVTKKAYAGLLKAYFDGPVSTSISQAALEVLAIIVYRQPLTRIEIDEVRGVQSSGAIQTLLARQLIVEKGRKDAPGRPILYGTSDYFLDYFGLGSLKELPELEQMTLTDDTAESDNDSADLYYRQFEQTLNETGPETAPKGEQ.

The interval 173–207 (DDTAESDNDSADLYYRQFEQTLNETGPETAPKGEQ) is disordered.

Belongs to the ScpB family. In terms of assembly, homodimer. Homodimerization may be required to stabilize the binding of ScpA to the Smc head domains. Component of a cohesin-like complex composed of ScpA, ScpB and the Smc homodimer, in which ScpA and ScpB bind to the head domain of Smc. The presence of the three proteins is required for the association of the complex with DNA.

It localises to the cytoplasm. In terms of biological role, participates in chromosomal partition during cell division. May act via the formation of a condensin-like complex containing Smc and ScpA that pull DNA away from mid-cell into both cell halves. In Latilactobacillus sakei subsp. sakei (strain 23K) (Lactobacillus sakei subsp. sakei), this protein is Segregation and condensation protein B.